The primary structure comprises 143 residues: Sirohydrochlorin cobaltochelatase (143 aa).

H9 functions as the Proton acceptor in the catalytic mechanism. Co(2+) is bound at residue H9. Position 9 (H9) interacts with Ni(2+). Substrate contacts are provided by residues E45 and 70–75; that span reads LAHGVH. H75 lines the Co(2+) pocket. Position 75 (H75) interacts with Ni(2+).

This sequence belongs to the CbiX family. CbiXS subfamily. In terms of assembly, homotetramer; dimer of dimers.

It catalyses the reaction Co-sirohydrochlorin + 2 H(+) = sirohydrochlorin + Co(2+). The enzyme catalyses Ni-sirohydrochlorin + 2 H(+) = sirohydrochlorin + Ni(2+). It functions in the pathway cofactor biosynthesis; adenosylcobalamin biosynthesis; cob(II)yrinate a,c-diamide from sirohydrochlorin (anaerobic route): step 1/10. Its function is as follows. Catalyzes the insertion of Co(2+) into sirohydrochlorin as part of the anaerobic pathway to cobalamin biosynthesis. Involved in the biosynthesis of the unique nickel-containing tetrapyrrole coenzyme F430, the prosthetic group of methyl-coenzyme M reductase (MCR), which plays a key role in methanogenesis and anaerobic methane oxidation. Catalyzes the insertion of Ni(2+) into sirohydrochlorin to yield Ni-sirohydrochlorin. This chain is Sirohydrochlorin cobaltochelatase, found in Methanopyrus kandleri (strain AV19 / DSM 6324 / JCM 9639 / NBRC 100938).